A 103-amino-acid chain; its full sequence is uncharacterized protein (103 aa).

This is an uncharacterized protein from Dictyostelium discoideum (Social amoeba).